The following is a 396-amino-acid chain: Phosphoglycerate kinase (396 aa).

Residues 21–23 (DFN), R36, 59–62 (HLGK), R119, and R156 each bind substrate. Residues K206, G294, E325, and 352–355 (GGDS) contribute to the ATP site.

Belongs to the phosphoglycerate kinase family. In terms of assembly, monomer.

The protein resides in the cytoplasm. It catalyses the reaction (2R)-3-phosphoglycerate + ATP = (2R)-3-phospho-glyceroyl phosphate + ADP. It participates in carbohydrate degradation; glycolysis; pyruvate from D-glyceraldehyde 3-phosphate: step 2/5. The polypeptide is Phosphoglycerate kinase (Listeria innocua serovar 6a (strain ATCC BAA-680 / CLIP 11262)).